A 236-amino-acid chain; its full sequence is Small ribosomal subunit protein uS2c (236 aa).

Belongs to the universal ribosomal protein uS2 family.

Its subcellular location is the plastid. It is found in the chloroplast. The chain is Small ribosomal subunit protein uS2c (rps2) from Olimarabidopsis pumila (Dwarf rocket).